The following is a 216-amino-acid chain: Large ribosomal subunit protein uL3 (216 aa).

A disordered region spans residues 119–143; that stretch reads GYQGNIHKDGQSRGPMAHGSRYHRR.

The protein belongs to the universal ribosomal protein uL3 family. In terms of assembly, part of the 50S ribosomal subunit. Forms a cluster with proteins L14 and L19.

Its function is as follows. One of the primary rRNA binding proteins, it binds directly near the 3'-end of the 23S rRNA, where it nucleates assembly of the 50S subunit. The polypeptide is Large ribosomal subunit protein uL3 (Levilactobacillus brevis (strain ATCC 367 / BCRC 12310 / CIP 105137 / JCM 1170 / LMG 11437 / NCIMB 947 / NCTC 947) (Lactobacillus brevis)).